A 1206-amino-acid chain; its full sequence is DNA-directed RNA polymerase subunit beta' (1206 aa).

The Zn(2+) site is built by cysteine 60, cysteine 62, cysteine 75, and cysteine 78. Positions 449, 451, and 453 each coordinate Mg(2+). Residues cysteine 818, cysteine 892, cysteine 899, and cysteine 902 each coordinate Zn(2+).

Belongs to the RNA polymerase beta' chain family. As to quaternary structure, the RNAP catalytic core consists of 2 alpha, 1 beta, 1 beta' and 1 omega subunit. When a sigma factor is associated with the core the holoenzyme is formed, which can initiate transcription. Requires Mg(2+) as cofactor. Zn(2+) is required as a cofactor.

It carries out the reaction RNA(n) + a ribonucleoside 5'-triphosphate = RNA(n+1) + diphosphate. Functionally, DNA-dependent RNA polymerase catalyzes the transcription of DNA into RNA using the four ribonucleoside triphosphates as substrates. The protein is DNA-directed RNA polymerase subunit beta' of Shouchella clausii (strain KSM-K16) (Alkalihalobacillus clausii).